Consider the following 770-residue polypeptide: NAD-dependent malic enzyme (770 aa).

Residues 1 to 440 (MNTGDKAKSQ…KLNRFVFRSG (440 aa)) form a malic enzyme region. The active-site Proton acceptor is the Lys-107. Residues Glu-149 and Asp-150 each coordinate a divalent metal cation. 2 residues coordinate NAD(+): Asp-175 and Asn-300. Positions 441–770 (FIMKPVFAAA…LAVVESSHPV (330 aa)) are phosphate acetyltransferase.

This sequence in the N-terminal section; belongs to the malic enzymes family. It in the C-terminal section; belongs to the phosphate acetyltransferase and butyryltransferase family. In terms of assembly, homooctamer. Mg(2+) is required as a cofactor. It depends on Mn(2+) as a cofactor.

It carries out the reaction (S)-malate + NAD(+) = pyruvate + CO2 + NADH. With respect to regulation, subject to substrate inhibition and shows allosteric regulation by acetyl-CoA. Functionally, required for symbiotic nitrogen fixation. Plays a key role in the conversion of malate to acetyl-CoA for efficient tricarboxylic acid cycle function in nitrogen-fixating bacteria. The polypeptide is NAD-dependent malic enzyme (dme) (Rhizobium meliloti (strain 1021) (Ensifer meliloti)).